The following is a 597-amino-acid chain: tRNA uridine 5-carboxymethylaminomethyl modification enzyme MnmG (597 aa).

11–16 (GAGHAG) contributes to the FAD binding site. NAD(+) is bound at residue 275–289 (SPRYCPSIEEKIERY).

The protein belongs to the MnmG family. In terms of assembly, homodimer. Heterotetramer of two MnmE and two MnmG subunits. The cofactor is FAD.

It is found in the cytoplasm. Its function is as follows. NAD-binding protein involved in the addition of a carboxymethylaminomethyl (cmnm) group at the wobble position (U34) of certain tRNAs, forming tRNA-cmnm(5)s(2)U34. The chain is tRNA uridine 5-carboxymethylaminomethyl modification enzyme MnmG from Endomicrobium trichonymphae.